The primary structure comprises 311 residues: tRNA dimethylallyltransferase (311 aa).

Residue glycine 9 to threonine 16 participates in ATP binding. Threonine 11 to threonine 16 is a binding site for substrate. The segment at aspartate 34 to glutamine 37 is interaction with substrate tRNA.

It belongs to the IPP transferase family. As to quaternary structure, monomer. Requires Mg(2+) as cofactor.

It carries out the reaction adenosine(37) in tRNA + dimethylallyl diphosphate = N(6)-dimethylallyladenosine(37) in tRNA + diphosphate. Catalyzes the transfer of a dimethylallyl group onto the adenine at position 37 in tRNAs that read codons beginning with uridine, leading to the formation of N6-(dimethylallyl)adenosine (i(6)A). The polypeptide is tRNA dimethylallyltransferase (Clostridium botulinum (strain Langeland / NCTC 10281 / Type F)).